We begin with the raw amino-acid sequence, 384 residues long: Chaperone protein DnaJ (384 aa).

Positions 5-70 constitute a J domain; that stretch reads DYYEVLGVAR…QKKAAYDRFG (66 aa). Residues 138 to 216 form a CR-type zinc finger; that stretch reads GAQKTINVPG…CRGAGRVQKE (79 aa). Residues Cys151, Cys154, Cys168, Cys171, Cys190, Cys193, Cys204, and Cys207 each coordinate Zn(2+). 4 CXXCXGXG motif repeats span residues 151–158, 168–175, 190–197, and 204–211; these read CAACNGTG, CPTCSGMG, CPTCSGHG, and CQECRGAG. Residues 300 to 322 are disordered; sequence KVPPGTQSGKQLRLRGKGMPPLR.

The protein belongs to the DnaJ family. In terms of assembly, homodimer. Zn(2+) is required as a cofactor.

It localises to the cytoplasm. Its function is as follows. Participates actively in the response to hyperosmotic and heat shock by preventing the aggregation of stress-denatured proteins and by disaggregating proteins, also in an autonomous, DnaK-independent fashion. Unfolded proteins bind initially to DnaJ; upon interaction with the DnaJ-bound protein, DnaK hydrolyzes its bound ATP, resulting in the formation of a stable complex. GrpE releases ADP from DnaK; ATP binding to DnaK triggers the release of the substrate protein, thus completing the reaction cycle. Several rounds of ATP-dependent interactions between DnaJ, DnaK and GrpE are required for fully efficient folding. Also involved, together with DnaK and GrpE, in the DNA replication of plasmids through activation of initiation proteins. The chain is Chaperone protein DnaJ from Paracoccus denitrificans (strain Pd 1222).